Here is a 277-residue protein sequence, read N- to C-terminus: Bleomycin hydrolase (277 aa).

C53 is a catalytic residue.

This sequence belongs to the peptidase C1 family. As to quaternary structure, homohexamer. Interacts with NUDT12 (via ANK repeats).

Its subcellular location is the cytoplasm. It localises to the cytoplasmic granule. It carries out the reaction Inactivates bleomycin B2 (a cytotoxic glycometallopeptide) by hydrolysis of a carboxyamide bond of beta-aminoalanine, but also shows general aminopeptidase activity. The specificity varies somewhat with source, but amino acid arylamides of Met, Leu and Ala are preferred.. Its activity is regulated as follows. Strongly inhibited by leupeptin, puromycin, NEM, and divalent cations. Its function is as follows. The normal physiological role of BLM hydrolase is unknown, but it catalyzes the inactivation of the antitumor drug BLM (a glycopeptide) by hydrolyzing the carboxamide bond of its B-aminoalaninamide moiety thus protecting normal and malignant cells from BLM toxicity. The polypeptide is Bleomycin hydrolase (BLMH) (Oryctolagus cuniculus (Rabbit)).